The sequence spans 429 residues: Adenylosuccinate synthetase (429 aa).

Residues 15–21 (GDEGKGK) and 43–45 (GHV) each bind GTP. Asp16 acts as the Proton acceptor in catalysis. The Mg(2+) site is built by Asp16 and Gly43. Residues 16 to 19 (DEGK), 41 to 44 (NAGH), Thr131, Arg145, Gln225, Thr240, and Arg304 each bind IMP. Catalysis depends on His44, which acts as the Proton donor. Residue 300 to 306 (SNTKRPR) participates in substrate binding. Residues Arg306, 332-334 (LLD), and 414-416 (SVG) contribute to the GTP site.

Belongs to the adenylosuccinate synthetase family. Homodimer. Requires Mg(2+) as cofactor.

Its subcellular location is the cytoplasm. The enzyme catalyses IMP + L-aspartate + GTP = N(6)-(1,2-dicarboxyethyl)-AMP + GDP + phosphate + 2 H(+). It functions in the pathway purine metabolism; AMP biosynthesis via de novo pathway; AMP from IMP: step 1/2. In terms of biological role, plays an important role in the de novo pathway of purine nucleotide biosynthesis. Catalyzes the first committed step in the biosynthesis of AMP from IMP. The polypeptide is Adenylosuccinate synthetase (Mesoplasma florum (strain ATCC 33453 / NBRC 100688 / NCTC 11704 / L1) (Acholeplasma florum)).